The sequence spans 247 residues: F-box and leucine-rich protein 22 (247 aa).

One can recognise an F-box domain in the interval 6–52; it reads TMHITQLNRECLLHLFSFLDKDSRKSLARTCSQLHDVFEDPALWSLL. 2 disordered regions span residues 124–154 and 173–247; these read SPRRREAPAPSSGTPIAVGPKSPRWGGPDHS and GLGS…AFPQ. The segment covering 184 to 200 has biased composition (pro residues); that stretch reads ETPPAPGVSWGPPPPGA.

Directly interacts with SKP1 and CUL1. In terms of tissue distribution, enriched in cardiac muscle.

It localises to the cytoplasm. The protein localises to the myofibril. The protein resides in the sarcomere. It is found in the z line. The protein operates within protein modification; protein ubiquitination. Substrate-recognition component of the SCF (SKP1-CUL1-F-box protein)-type E3 ubiquitin ligase complex. Promotes ubiquitination of sarcomeric proteins alpha-actinin-2 (ACTN2) and filamin-C (FLNC). The protein is F-box and leucine-rich protein 22 (FBXL22) of Homo sapiens (Human).